An 843-amino-acid chain; its full sequence is Alpha-L-fucosidase 2 (843 aa).

The first 27 residues, 1–27, serve as a signal peptide directing secretion; sequence MAEKSSFFVHFSCLLLLLTIIITCGEG. Asn62, Asn253, Asn365, and Asn605 each carry an N-linked (GlcNAc...) asparagine glycan.

The protein belongs to the glycosyl hydrolase 95 family. In terms of tissue distribution, ubiquitous. Highest expression in vascular tissues, leaf trichomes, root elongation zone and emerging lateral roots.

It is found in the secreted. It localises to the extracellular space. The protein resides in the apoplast. It catalyses the reaction an alpha-L-fucoside + H2O = L-fucose + an alcohol. Hydrolyzes alpha-1,2-linked fucose. Also active on fucosylated xyloglucan oligosaccharides. No activity with 3-fucosyllactose, p-nitrophenyl-alpha-I-fucopyranoside, lacto-N-fucopentaose II, lacto-N-fucopentaose III or alpha 1,6-fucosylated chitopentaose. Involved in apoplastic xyloglucan metabolism. The protein is Alpha-L-fucosidase 2 (FUC95A) of Arabidopsis thaliana (Mouse-ear cress).